We begin with the raw amino-acid sequence, 417 residues long: MEKPLFRNQKGLMTLLASQTISSLGDWLHILAVLTLAAFQLHASPLDMSLLMMSFALPVIVLGPVSGLLADRFDRKTIMFLSEIGRALTVISCVYVSELWQLYVLLSVQSCFSSLFLPAKNGKLKELAPEAHIQQAVSVSSIIDNSSKIFGPALGGTLIAAFSIHSVFYINAGAFFLSAVILFFLPRDAFLQKANTPQEKTAALTSIKEGLQFLKRMPLLLTGLLTACVVLFVLQIGDSQAIILIRSFSGAPPELAGWCMAVSGAGMLLTAAITGRRRITSYLLYFSAGTLLLGLATGGAPFLSGMGIAGITLFIFAFFIMGAAFGLVHIPFQILVQTTVPVDYSGRVFGAIQSATTLASILGMAGGGVLAEWIGVSLAFLVCGCLLIMIGLITLIGKKIAESRRYLVTKSNKGAQG.

10 helical membrane-spanning segments follow: residues 21–41 (ISSL…AFQL), 50–70 (LLMM…GLLA), 88–108 (LTVI…LLSV), 166–186 (SVFY…FFLP), 217–237 (MPLL…LQIG), 255–275 (LAGW…AITG), 283–303 (LLYF…APFL), 308–328 (IAGI…FGLV), 351–371 (AIQS…GVLA), and 373–393 (WIGV…IGLI).

This sequence belongs to the major facilitator superfamily. TCR/Tet family.

Its subcellular location is the cell membrane. This is an uncharacterized protein from Bacillus subtilis (strain 168).